The sequence spans 1370 residues: MKSGSGGGSPTSLWGLVFLSAALSLWPTSGEICGPGIDIRNDYQQLKRLENCTVIEGFLHILLISKAEDYRSYRFPKLTVITEYLLLFRVAGLESLGDLFPNLTVIRGWKLFYNYALVIFEMTNLKDIGLYNLRNITRGAIRIEKNADLCYLSTIDWSLILDAVSNNYIVGNKPPKECGDLCPGTLEEKPMCEKTTINNEYNYRCWTTNRCQKMCPSVCGKRACTENNECCHPECLGSCHTPDDNTTCVACRHYYYKGVCVPACPPGTYRFEGWRCVDRDFCANIPNAESSDSDGFVIHDGECMQECPSGFIRNSTQSMYCIPCEGPCPKVCGDEEKKTKTIDSVTSAQMLQGCTILKGNLLINIRRGNNIASELENFMGLIEVVTGYVKIRHSHALVSLSFLKNLRLILGEEQLEGNYSFYVLDNQNLQQLWDWNHRNLTVRSGKMYFAFNPKLCVSEIYRMEEVTGTKGRQSKGDINTRNNGERASCESDVLRFTSTTTWKNRIIITWHRYRPPDYRDLISFTVYYKEAPFKNVTEYDGQDACGSNSWNMVDVDLPPNKEGEPGILLHGLKPWTQYAVYVKAVTLTMVENDHIRGAKSEILYIRTNASVPSIPLDVLSASNSSSQLIVKWNPPTLPNGNLSYYIVRWQRQPQDGYLFRHNYCSKDKIPIRKYADGTIDVEEVTENPKTEVCGGDKGPCCACPKTEAEKQAEKEEAEYRKVFENFLHNSIFVPRPERRRRDVLQVANTTMSSRSRNTTVADTYNITDPEEFETEYPFFESRVDNKERTVISNLRPFTLYRIDIHSCNHEAEKLGCSASNFVFARTMPAEGADDIPGPVTWEPRPENSIFLKWPEPENPNGLILMYEIKYGSQVEDQRECVSRQEYRKYGGAKLNRLNPGNYTARIQATSLSGNGSWTDPVFFYVPAKTTYENFMHLIIALPVAILLIVGGLVIMLYVFHRKRNNSRLGNGVLYASVNPEYFSAADVYVPDEWEVAREKITMNRELGQGSFGMVYEGVAKGVVKDEPETRVAIKTVNEAASMRERIEFLNEASVMKEFNCHHVVRLLGVVSQGQPTLVIMELMTRGDLKSYLRSLRPEVENNLVLIPPSLSKMIQMAGEIADGMAYLNANKFVHRDLAARNCMVAEDFTVKIGDFGMTRDIYETDYYRKGGKGLLPVRWMSPESLKDGVFTTHSDVWSFGVVLWEIATLAEQPYQGLSNEQVLRFVMEGGLLDKPDNCPDMLFELMRMCWQYNPKMRPSFLEIIGSIKDEMEPSFQEVSFYYSEENKPPEPEELEMELELEPENMESVPLDPSASSASLPLPERHSGHKAENGPGVLVLRASFDERQPYAHMNGGRANERALPLPQSSTC.

The first 30 residues, 1–30, serve as a signal peptide directing secretion; sequence MKSGSGGGSPTSLWGLVFLSAALSLWPTSG. C33 and C52 are joined by a disulfide. Residues N51, N102, and N135 are each glycosylated (N-linked (GlcNAc...) asparagine). Cystine bridges form between C150-C178, C182-C205, C192-C211, C215-C224, C219-C230, C231-C239, C235-C248, C251-C260, C264-C276, C282-C303, C307-C321, C324-C328, and C332-C354. A glycan (N-linked (GlcNAc...) asparagine) is linked at N245. N314 is a glycosylation site (N-linked (GlcNAc...) asparagine). N-linked (GlcNAc...) asparagine glycosylation is found at N418 and N439. Residues C456 and C489 are joined by a disulfide bond. Fibronectin type-III domains are found at residues 490 to 610 and 611 to 709; these read ESDV…TNAS and VPSI…TEAE. 9 N-linked (GlcNAc...) asparagine glycosylation sites follow: N535, N608, N623, N641, N748, N757, N765, N901, and N914. The Extracellular segment spans residues 742–936; that stretch reads DVLQVANTTM…AKTTYENFMH (195 aa). Residues 835–928 form the Fibronectin type-III 3 domain; sequence IPGPVTWEPR…DPVFFYVPAK (94 aa). A helical transmembrane segment spans residues 937 to 960; sequence LIIALPVAILLIVGGLVIMLYVFH. At 961-1370 the chain is on the cytoplasmic side; it reads RKRNNSRLGN…ALPLPQSSTC (410 aa). Residues 978 to 981 carry the IRS1- and SHC1-binding motif; it reads NPEY. Position 981 is a phosphotyrosine (Y981). The 276-residue stretch at 1000 to 1275 folds into the Protein kinase domain; sequence ITMNRELGQG…SIKDEMEPSF (276 aa). ATP is bound by residues 1006-1014 and K1034; that span reads LGQGSFGMV. D1136 functions as the Proton acceptor in the catalytic mechanism. Phosphotyrosine; by autocatalysis occurs at positions 1162, 1166, and 1167. Residues K1169 and K1172 each participate in a glycyl lysine isopeptide (Lys-Gly) (interchain with G-Cter in ubiquitin) cross-link. Residue S1279 is modified to Phosphoserine; by GSK3-beta. S1283 carries the post-translational modification Phosphoserine. The disordered stretch occupies residues 1304-1370; it reads NMESVPLDPS…ALPLPQSSTC (67 aa). A compositionally biased stretch (low complexity) spans 1305 to 1321; sequence MESVPLDPSASSASLPL. A compositionally biased stretch (basic and acidic residues) spans 1322–1331; it reads PERHSGHKAE.

This sequence belongs to the protein kinase superfamily. Tyr protein kinase family. Insulin receptor subfamily. As to quaternary structure, tetramer of 2 alpha and 2 beta chains linked by disulfide bonds. The alpha chains contribute to the formation of the ligand-binding domain, while the beta chain carries the kinase domain. Interacts with PIK3R1 and with the PTB/PID domains of IRS1 and SHC1 in vitro when autophosphorylated on tyrosine residues. Forms a hybrid receptor with INSR, the hybrid is a tetramer consisting of 1 alpha chain and 1 beta chain of INSR and 1 alpha chain and 1 beta chain of IGF1R. Interacts with ARRB1 and ARRB2. Interacts with GRB10. Interacts with RACK1. Interacts with SOCS1, SOCS2 and SOCS3. Interacts with 14-3-3 proteins. Interacts with NMD2. Interacts with MAP3K5. Interacts with STAT3. Found in a ternary complex with IGF1 and ITGAV:ITGB3 or ITGA6:ITGB4. Interacts (nascent precursor form) with ZFAND2B. In terms of processing, autophosphorylated on tyrosine residues in response to ligand binding. Autophosphorylation occurs in trans, i.e. one subunit of the dimeric receptor phosphorylates tyrosine residues on the other subunit. Autophosphorylation occurs in a sequential manner; Tyr-1166 is predominantly phosphorylated first, followed by phosphorylation of Tyr-1162 and Tyr-1167. While every single phosphorylation increases kinase activity, all three tyrosine residues in the kinase activation loop (Tyr-1162, Tyr-1166 and Tyr-1167) have to be phosphorylated for optimal activity. Can be autophosphorylated at additional tyrosine residues (in vitro). Autophosphorylated is followed by phosphorylation of juxtamembrane tyrosines and C-terminal serines. May also be phosphorylated at Tyr-1162 and Tyr-1167 by mTORC2. Phosphorylation of Tyr-981 is required for IRS1- and SHC1-binding. Phosphorylation of Ser-1279 by GSK-3beta restrains kinase activity and promotes cell surface expression, it requires a priming phosphorylation at Ser-1283. Dephosphorylated by PTPN1. Polyubiquitinated at Lys-1169 and Lys-1172 through both 'Lys-48' and 'Lys-29' linkages, promoting receptor endocytosis and subsequent degradation by the proteasome. Ubiquitination is facilitated by pre-existing phosphorylation. Post-translationally, sumoylated with SUMO1. In terms of processing, controlled by regulated intramembrane proteolysis (RIP). Undergoes metalloprotease-dependent constitutive ectodomain shedding to produce a membrane-anchored 52 kDa C-Terminal fragment which is further processed by presenilin gamma-secretase to yield an intracellular 50 kDa fragment.

It localises to the cell membrane. The catalysed reaction is L-tyrosyl-[protein] + ATP = O-phospho-L-tyrosyl-[protein] + ADP + H(+). With respect to regulation, activated by autophosphorylation at Tyr-1162, Tyr-1166 and Tyr-1167 on the kinase activation loop; phosphorylation at all three tyrosine residues is required for optimal kinase activity. Inhibited by MSC1609119A-1, BMS-754807, PQIP, benzimidazole pyridinone, isoquinolinedione, bis-azaindole, 3-cyanoquinoline, 2,4-bis-arylamino-1,3-pyrimidine, pyrrolopyrimidine, pyrrole-5-carboxaldehyde, picropodophyllin (PPP), tyrphostin derivatives. While most inhibitors bind to the ATP binding pocket, MSC1609119A-1 functions as allosteric inhibitor and binds close to the DFG motif and the activation loop. Dephosphorylated by PTPN1. Its function is as follows. Receptor tyrosine kinase which mediates actions of insulin-like growth factor 1 (IGF1). Binds IGF1 with high affinity and IGF2 and insulin (INS) with a lower affinity. The activated IGF1R is involved in cell growth and survival control. IGF1R is crucial for tumor transformation and survival of malignant cell. Ligand binding activates the receptor kinase, leading to receptor autophosphorylation, and tyrosines phosphorylation of multiple substrates, that function as signaling adapter proteins including, the insulin-receptor substrates (IRS1/2), Shc and 14-3-3 proteins. Phosphorylation of IRSs proteins lead to the activation of two main signaling pathways: the PI3K-AKT/PKB pathway and the Ras-MAPK pathway. The result of activating the MAPK pathway is increased cellular proliferation, whereas activating the PI3K pathway inhibits apoptosis and stimulates protein synthesis. Phosphorylated IRS1 can activate the 85 kDa regulatory subunit of PI3K (PIK3R1), leading to activation of several downstream substrates, including protein AKT/PKB. AKT phosphorylation, in turn, enhances protein synthesis through mTOR activation and triggers the antiapoptotic effects of IGFIR through phosphorylation and inactivation of BAD. In parallel to PI3K-driven signaling, recruitment of Grb2/SOS by phosphorylated IRS1 or Shc leads to recruitment of Ras and activation of the ras-MAPK pathway. In addition to these two main signaling pathways IGF1R signals also through the Janus kinase/signal transducer and activator of transcription pathway (JAK/STAT). Phosphorylation of JAK proteins can lead to phosphorylation/activation of signal transducers and activators of transcription (STAT) proteins. In particular activation of STAT3, may be essential for the transforming activity of IGF1R. The JAK/STAT pathway activates gene transcription and may be responsible for the transforming activity. JNK kinases can also be activated by the IGF1R. IGF1 exerts inhibiting activities on JNK activation via phosphorylation and inhibition of MAP3K5/ASK1, which is able to directly associate with the IGF1R. When present in a hybrid receptor with INSR, binds IGF1. The protein is Insulin-like growth factor 1 receptor (Igf1r) of Rattus norvegicus (Rat).